The primary structure comprises 451 residues: Probable plasmid replicative DNA helicase (451 aa).

An SF4 helicase domain is found at Asn-194–Trp-451. Ala-225 to Thr-232 provides a ligand contact to ATP.

Belongs to the helicase family. DnaB subfamily. As to quaternary structure, homohexamer.

The catalysed reaction is Couples ATP hydrolysis with the unwinding of duplex DNA at the replication fork by translocating in the 5'-3' direction. This creates two antiparallel DNA single strands (ssDNA). The leading ssDNA polymer is the template for DNA polymerase III holoenzyme which synthesizes a continuous strand.. It catalyses the reaction ATP + H2O = ADP + phosphate + H(+). A replicative DNA helicase, it participates in initiation and elongation during DNA replication. Travels ahead of the DNA replisome, separating dsDNA into templates for DNA synthesis. A processive ATP-dependent 5'-3' DNA helicase it has DNA-dependent ATPase activity. In Chlamydia muridarum (strain MoPn / Nigg), this protein is Probable plasmid replicative DNA helicase.